The chain runs to 633 residues: Probable potassium transport system protein Kup 2 (633 aa).

Transmembrane regions (helical) follow at residues 18-38 (FVGL…TSPL), 61-81 (LISL…VLFL), 107-127 (VPVL…DAMI), 143-163 (ITPA…IVLF), 176-196 (FFGP…VIHI), 211-231 (ALSF…AVFL), 255-275 (WFVL…ALVL), 293-313 (ALLP…QAVI), 345-365 (IYVP…IFSF), 371-391 (LATA…MLAF), 402-422 (FMLA…FLAA), and 429-449 (DGGW…WTWT).

This sequence belongs to the HAK/KUP transporter (TC 2.A.72) family.

It is found in the cell inner membrane. It carries out the reaction K(+)(in) + H(+)(in) = K(+)(out) + H(+)(out). Functionally, transport of potassium into the cell. Likely operates as a K(+):H(+) symporter. The chain is Probable potassium transport system protein Kup 2 from Rhizobium etli (strain ATCC 51251 / DSM 11541 / JCM 21823 / NBRC 15573 / CFN 42).